The following is a 380-amino-acid chain: Ribosomal RNA small subunit methyltransferase, mitochondrial (380 aa).

The transit peptide at 1 to 26 directs the protein to the mitochondrion; that stretch reads MILRLKDQTLIKINSTRSYLSSLVFR. Residues H70, L72, G97, E118, D146, and N161 each coordinate S-adenosyl-L-methionine.

This sequence belongs to the class I-like SAM-binding methyltransferase superfamily. rRNA adenine N(6)-methyltransferase family.

The protein resides in the mitochondrion. The enzyme catalyses adenosine(1914)/adenosine(1915) in 18S rRNA + 4 S-adenosyl-L-methionine = N(6)-dimethyladenosine(1914)/N(6)-dimethyladenosine(1915) in 18S rRNA + 4 S-adenosyl-L-homocysteine + 4 H(+). In terms of biological role, N6-adenine methyltransferase which modifies the AA dinucleotide at the plant mitochondrial 18S rRNA nucleotides A1914 and A1915. Not active as mitochondrial transcription factor. The sequence is that of Ribosomal RNA small subunit methyltransferase, mitochondrial from Arabidopsis thaliana (Mouse-ear cress).